A 37-amino-acid polypeptide reads, in one-letter code: Large ribosomal subunit protein bL36A (37 aa).

This sequence belongs to the bacterial ribosomal protein bL36 family.

This chain is Large ribosomal subunit protein bL36A, found in Haemophilus ducreyi (strain 35000HP / ATCC 700724).